The chain runs to 419 residues: UDP-N-acetylglucosamine 1-carboxyvinyltransferase (419 aa).

22 to 23 (KN) lines the phosphoenolpyruvate pocket. Position 93 (Arg93) interacts with UDP-N-acetyl-alpha-D-glucosamine. The active-site Proton donor is the Cys117. 2-(S-cysteinyl)pyruvic acid O-phosphothioketal is present on Cys117. UDP-N-acetyl-alpha-D-glucosamine-binding residues include Asp306 and Val328.

This sequence belongs to the EPSP synthase family. MurA subfamily.

The protein resides in the cytoplasm. The catalysed reaction is phosphoenolpyruvate + UDP-N-acetyl-alpha-D-glucosamine = UDP-N-acetyl-3-O-(1-carboxyvinyl)-alpha-D-glucosamine + phosphate. Its pathway is cell wall biogenesis; peptidoglycan biosynthesis. Its function is as follows. Cell wall formation. Adds enolpyruvyl to UDP-N-acetylglucosamine. In Thioalkalivibrio sulfidiphilus (strain HL-EbGR7), this protein is UDP-N-acetylglucosamine 1-carboxyvinyltransferase.